The sequence spans 377 residues: N-acetyldiaminopimelate deacetylase (377 aa).

Residue Asp69 is part of the active site. The active-site Proton acceptor is the Glu128.

It belongs to the peptidase M20A family. N-acetyldiaminopimelate deacetylase subfamily.

The catalysed reaction is N-acetyl-(2S,6S)-2,6-diaminopimelate + H2O = (2S,6S)-2,6-diaminopimelate + acetate. It functions in the pathway amino-acid biosynthesis; L-lysine biosynthesis via DAP pathway; LL-2,6-diaminopimelate from (S)-tetrahydrodipicolinate (acetylase route): step 3/3. Its function is as follows. Catalyzes the conversion of N-acetyl-diaminopimelate to diaminopimelate and acetate. In Streptococcus sanguinis (strain SK36), this protein is N-acetyldiaminopimelate deacetylase.